Here is a 244-residue protein sequence, read N- to C-terminus: ATP-dependent Clp protease ATP-binding subunit CLPT4, chloroplastic (244 aa).

The N-terminal 64 residues, 1-64 (MQALQASRLT…WRSSGRVITR (64 aa)), are a transit peptide targeting the chloroplast. Over residues 30-48 (SRPISSGVSSSQELSSRSS) the composition is skewed to low complexity. Disordered stretches follow at residues 30 to 55 (SRPI…TKSW) and 220 to 244 (GRRY…VSFL).

Belongs to the ClpA/ClpB family.

Its subcellular location is the plastid. The protein localises to the chloroplast. Functionally, accessory protein regulating the assembly of the plastid Clp protease system. This Chlamydomonas reinhardtii (Chlamydomonas smithii) protein is ATP-dependent Clp protease ATP-binding subunit CLPT4, chloroplastic.